We begin with the raw amino-acid sequence, 693 residues long: Elongation factor G (693 aa).

The 275-residue stretch at glutamate 8–leucine 282 folds into the tr-type G domain. Residues alanine 17–threonine 24, aspartate 81–histidine 85, and asparagine 135–aspartate 138 contribute to the GTP site.

Belongs to the TRAFAC class translation factor GTPase superfamily. Classic translation factor GTPase family. EF-G/EF-2 subfamily.

It is found in the cytoplasm. Functionally, catalyzes the GTP-dependent ribosomal translocation step during translation elongation. During this step, the ribosome changes from the pre-translocational (PRE) to the post-translocational (POST) state as the newly formed A-site-bound peptidyl-tRNA and P-site-bound deacylated tRNA move to the P and E sites, respectively. Catalyzes the coordinated movement of the two tRNA molecules, the mRNA and conformational changes in the ribosome. The chain is Elongation factor G from Streptococcus pneumoniae (strain CGSP14).